The following is a 265-amino-acid chain: Shikimate dehydrogenase (NADP(+)) (265 aa).

Shikimate contacts are provided by residues 15-17 (SLS) and T62. K66 acts as the Proton acceptor in catalysis. Shikimate-binding residues include N87 and D102. NADP(+) is bound by residues 125-129 (GAGGA), 149-154 (NRTLEK), and L209. Shikimate is bound at residue Y211. G233 serves as a coordination point for NADP(+).

This sequence belongs to the shikimate dehydrogenase family. As to quaternary structure, homodimer.

It carries out the reaction shikimate + NADP(+) = 3-dehydroshikimate + NADPH + H(+). Its pathway is metabolic intermediate biosynthesis; chorismate biosynthesis; chorismate from D-erythrose 4-phosphate and phosphoenolpyruvate: step 4/7. Functionally, involved in the biosynthesis of the chorismate, which leads to the biosynthesis of aromatic amino acids. Catalyzes the reversible NADPH linked reduction of 3-dehydroshikimate (DHSA) to yield shikimate (SA). This chain is Shikimate dehydrogenase (NADP(+)), found in Legionella pneumophila subsp. pneumophila (strain Philadelphia 1 / ATCC 33152 / DSM 7513).